The primary structure comprises 293 residues: MSVQTSQQTVNLQTEFKQTQIQEVLDDLDRELIGLQTVKTRIREIAALLLVDRLRQKLGLSSSNPGLHMSFTGSPGTGKTTVARKMADILYRLGYIKKGHLITVTRDDLVGQYIGHTAPKTKQVLKNAMGGVLFIDEAYYLYRPDNERDYGAEAIEILLQVMENQRDDLVIIFAGYKDKMDRFYTSNPGLASRVANHVNFPDYTPEELLMIGKIMLQEQQYQMTPEAEKVFLQYIQRRMEQPHFANARSVRNALDRARLRQANRIFATPGKKLTKFDLVTIQAEDILKSRLFQ.

75–82 (PGTGKTTV) provides a ligand contact to ATP.

This sequence belongs to the CbxX/CfxQ family. Forms homooligomers. Forms heterohexameric rings with the nuclear-encoded Rca subunit consisting of 3 of each nuclear- and plastidial-encoded subunits that alternate in the ring.

The protein localises to the plastid. Its subcellular location is the chloroplast. Its function is as follows. Required for the expression of ribulose 1,5-bisphosphate carboxylase/oxygenase (RuBisCo). ATPase involved in the activation of red-type RuBisCo, which tends to form inactive complexes with its substrate ribulose 1,5-bisphosphate (RuBP). Catalyzes the release of RuBP from inhibited RuBisCo in an ATP-dependent manner. Activation of RuBisCO involves the ATP-dependent carboxylation of the epsilon-amino group of lysine leading to a carbamate structure. The nuclear-encoded subunit plays a more critical role in activase function than the plastidial-encoded subunit. The sequence is that of Ribulose bisphosphate carboxylase/oxygenase activase, chloroplastic from Cyanidioschyzon merolae (strain NIES-3377 / 10D) (Unicellular red alga).